Here is a 516-residue protein sequence, read N- to C-terminus: Serine carboxypeptidase II-3 (516 aa).

Residues 1–20 (MKCTVVALVLLVAVQCLVLG) form the signal peptide. A propeptide spanning residues 21–77 (AGPAAAAKARRTRQGDYLNRLRGSPSSRASWESLAAVEEQTTTKAAGRPAPVAAAVE) is cleaved from the precursor. Intrachain disulfides connect C143–C391, C300–C315, and C339–C359. N-linked (GlcNAc...) asparagine glycans are attached at residues N194 and N205. S236 is an active-site residue. The N-linked (GlcNAc...) asparagine glycan is linked to N301. Residues 342-352 (EKLVTPPIAPS) constitute a propeptide, linker peptide. N380 carries an N-linked (GlcNAc...) asparagine glycan. Active-site residues include D427 and H484.

The protein belongs to the peptidase S10 family. In terms of assembly, carboxypeptidase II is a dimer, where each monomer is composed of two chains linked by a disulfide bond. In terms of processing, the linker peptide is endoproteolytically excised during enzyme maturation.

It catalyses the reaction Preferential release of a C-terminal arginine or lysine residue.. In Hordeum vulgare (Barley), this protein is Serine carboxypeptidase II-3 (CXP;2-3).